We begin with the raw amino-acid sequence, 969 residues long: Leucine--tRNA ligase (969 aa).

The 'HIGH' region signature appears at 78-89 (PYPSGEGLHVGH). A 'KMSKS' region motif is present at residues 739 to 743 (KIGKS). Residue lysine 742 coordinates ATP.

This sequence belongs to the class-I aminoacyl-tRNA synthetase family.

It localises to the cytoplasm. The enzyme catalyses tRNA(Leu) + L-leucine + ATP = L-leucyl-tRNA(Leu) + AMP + diphosphate. In Mycobacterium tuberculosis (strain ATCC 25177 / H37Ra), this protein is Leucine--tRNA ligase.